Reading from the N-terminus, the 261-residue chain is Small ribosomal subunit protein uS2 (261 aa).

Residue S2 is modified to N-acetylserine. The tract at residues 215-261 is disordered; it reads AEEAKTTEDVEEAAPVDADEWTGETEEVDWAESGATPAVEDAAASNW. The span at 223–244 shows a compositional bias: acidic residues; sequence DVEEAAPVDADEWTGETEEVDW.

This sequence belongs to the universal ribosomal protein uS2 family. In terms of assembly, component of the small ribosomal subunit. Mature ribosomes consist of a small (40S) and a large (60S) subunit. The 40S subunit contains about 33 different proteins and 1 molecule of RNA (18S). The 60S subunit contains about 49 different proteins and 3 molecules of RNA (25S, 5.8S and 5S). Interacts with RPS21.

Its subcellular location is the cytoplasm. Required for the assembly and/or stability of the 40S ribosomal subunit. Required for the processing of the 20S rRNA-precursor to mature 18S rRNA in a late step of the maturation of 40S ribosomal subunits. The chain is Small ribosomal subunit protein uS2 from Scheffersomyces stipitis (strain ATCC 58785 / CBS 6054 / NBRC 10063 / NRRL Y-11545) (Yeast).